The primary structure comprises 284 residues: Formamidopyrimidine-DNA glycosylase (284 aa).

Pro-2 serves as the catalytic Schiff-base intermediate with DNA. The active-site Proton donor is Glu-3. Lys-61 serves as the catalytic Proton donor; for beta-elimination activity. Positions 95, 115, and 157 each coordinate DNA. Residues 243–277 (AVYGRAGQPCRRCGTAIVREPFMNRSSFRCPACQP) form an FPG-type zinc finger. Residue Arg-267 is the Proton donor; for delta-elimination activity of the active site.

It belongs to the FPG family. As to quaternary structure, monomer. Zn(2+) serves as cofactor.

It catalyses the reaction Hydrolysis of DNA containing ring-opened 7-methylguanine residues, releasing 2,6-diamino-4-hydroxy-5-(N-methyl)formamidopyrimidine.. The enzyme catalyses 2'-deoxyribonucleotide-(2'-deoxyribose 5'-phosphate)-2'-deoxyribonucleotide-DNA = a 3'-end 2'-deoxyribonucleotide-(2,3-dehydro-2,3-deoxyribose 5'-phosphate)-DNA + a 5'-end 5'-phospho-2'-deoxyribonucleoside-DNA + H(+). Its function is as follows. Involved in base excision repair of DNA damaged by oxidation or by mutagenic agents. Acts as a DNA glycosylase that recognizes and removes damaged bases. Has a preference for oxidized purines, such as 7,8-dihydro-8-oxoguanine (8-oxoG). Has AP (apurinic/apyrimidinic) lyase activity and introduces nicks in the DNA strand. Cleaves the DNA backbone by beta-delta elimination to generate a single-strand break at the site of the removed base with both 3'- and 5'-phosphates. This is Formamidopyrimidine-DNA glycosylase from Acidothermus cellulolyticus (strain ATCC 43068 / DSM 8971 / 11B).